Consider the following 179-residue polypeptide: Ribosome maturation factor RimM (179 aa).

Positions 102-179 (DGEYYWYQLE…EMKVEWDADF (78 aa)) constitute a PRC barrel domain.

The protein belongs to the RimM family. Binds ribosomal protein uS19.

The protein resides in the cytoplasm. In terms of biological role, an accessory protein needed during the final step in the assembly of 30S ribosomal subunit, possibly for assembly of the head region. Essential for efficient processing of 16S rRNA. May be needed both before and after RbfA during the maturation of 16S rRNA. It has affinity for free ribosomal 30S subunits but not for 70S ribosomes. The sequence is that of Ribosome maturation factor RimM from Pseudomonas syringae pv. tomato (strain ATCC BAA-871 / DC3000).